Reading from the N-terminus, the 148-residue chain is Large ribosomal subunit protein bL9 (148 aa).

Belongs to the bacterial ribosomal protein bL9 family.

Its function is as follows. Binds to the 23S rRNA. The chain is Large ribosomal subunit protein bL9 from Staphylococcus aureus (strain Newman).